The following is a 177-amino-acid chain: Ribulose bisphosphate carboxylase small subunit, chloroplastic 5 (177 aa).

Residues 1 to 56 (MASSMMASTAAVARAGPAQSSMVAPFNGLRSSVAFPATRKANNDLSTLPSNGGRVS) constitute a chloroplast transit peptide.

The protein belongs to the RuBisCO small chain family. As to quaternary structure, heterohexadecamer of 8 large and 8 small subunits.

It localises to the plastid. It is found in the chloroplast. Functionally, ruBisCO catalyzes two reactions: the carboxylation of D-ribulose 1,5-bisphosphate, the primary event in carbon dioxide fixation, as well as the oxidative fragmentation of the pentose substrate. Both reactions occur simultaneously and in competition at the same active site. Although the small subunit is not catalytic it is essential for maximal activity. The sequence is that of Ribulose bisphosphate carboxylase small subunit, chloroplastic 5 from Lemna gibba (Swollen duckweed).